Here is a 754-residue protein sequence, read N- to C-terminus: Catalase-peroxidase (754 aa).

The disordered stretch occupies residues 1-29 (MGTQPARKLRNRVFPHPHNHRKEKPMAND). Positions 7–23 (RKLRNRVFPHPHNHRKE) are enriched in basic residues. The active-site Tryptophan radical intermediate is the Trp-106. A cross-link (tryptophyl-tyrosyl-methioninium (Trp-Tyr) (with M-275)) is located at residues 122–249 (WHAAGTYRIA…LAAVQMGLIY (128 aa)). Catalysis depends on His-123, which acts as the Proton acceptor. The tryptophyl-tyrosyl-methioninium (Tyr-Met) (with W-122) cross-link spans 249 to 275 (YVNPEGVDGHPDPLCTAQDVRTTFARM). Heme b is bound at residue His-290.

Belongs to the peroxidase family. Peroxidase/catalase subfamily. Homodimer. It depends on heme b as a cofactor. Formation of the three residue Trp-Tyr-Met cross-link is important for the catalase, but not the peroxidase activity of the enzyme.

The catalysed reaction is H2O2 + AH2 = A + 2 H2O. It carries out the reaction 2 H2O2 = O2 + 2 H2O. In terms of biological role, bifunctional enzyme with both catalase and broad-spectrum peroxidase activity. Also displays NADH oxidase, isoniazid hydrazine lyase and isonicotinoyl-NAD synthase activities. In Synechocystis sp. (strain ATCC 27184 / PCC 6803 / Kazusa), this protein is Catalase-peroxidase.